A 737-amino-acid chain; its full sequence is MPPRRAQAPGAPLLPVLALLPLLLGAGPQSGCLASPVSAAPLPAPGPCASQPCRNGGVCTPRSVTDQEHPAADAEPRYSCTCPAGVSGTYCQFVADPCASNPCHHGNCSSSSSSSSDSYLCICNDGYEGLNCEQPLPSIPTSGWTESTAPRQLQPVPATQEPDIILPRSQATVTLPTWQPKTGQKVVEMKWDQVEVVPDVACGNASSNNSAGGRLVSFEVPQNTSVKIRQDANSLLILLWKVTATGFQQCSLIDGRSVTPLQAPGGLVLLEEMLALGPNHFIGFVNDSVAKSIVALRLTLVVKASNCVPGDSHSNDLECSGKGKCATKPSEATFSCTCQDQYIGTFCEEFDACQRKPCQNEASCIDANEKQDGSNFTCLCLPGYTGELCQSKIDYCVLDPCRNGATCVSSLSGFTCQCLEGYFGSACEEKVDPCMSSPCQNNGTCYVDGVHFTCSCSPGFTGPTCAQLVDFCALSPCAHGMCRSVGTSYKCLCDPGYHGLYCEEEYNECLSAPCLNAATCRDLINGYECVCLAEYKGTHCELYKDPCANISCLNGGTCDSEGLNGTCICAPGFTGEECDIDINECDSNPCHHAGTCLDQPNGYTCHCPHGWVGANCEIHLQWKSGHMAESLTNMPRHSLYIIIGALCVAFILMLIILIVGICRISRIEYQGSSRPAYEEFYNCRSIDSEFSNAIASIRHARFGKKSRPAMYDVTPIAYEDYSPDDKPLVTLIKTKDL.

Positions 1–25 (MPPRRAQAPGAPLLPVLALLPLLLG) are cleaved as a signal peptide. Topologically, residues 26-640 (AGPQSGCLAS…LTNMPRHSLY (615 aa)) are extracellular. EGF-like domains are found at residues 44-92 (APGP…TYCQ) and 94-133 (VADPCASNPCHHGNCSSSSSSSSDSYLCICNDGYEGLNCE). Residues 44–133 (APGPCASQPC…NDGYEGLNCE (90 aa)) are interaction with NOTCH1. 6 disulfides stabilise this stretch: C48–C59, C53–C80, C82–C91, C98–C108, C103–C121, and C123–C132. An N-linked (GlcNAc...) asparagine glycan is attached at N204. 5 consecutive EGF-like domains span residues 309 to 348 (PGDSHSNDLECSGKGKCATKPSEATFSCTCQDQYIGTFCE), 349 to 390 (EFDA…ELCQ), 392 to 428 (KIDYCVLDPCRNGATCVSSLSGFTCQCLEGYFGSACE), 430 to 466 (KVDPCMSSPCQNNGTCYVDGVHFTCSCSPGFTGPTCA), and 468 to 503 (LVDFCALSPCAHGMCRSVGTSYKCLCDPGYHGLYCE). 23 disulfides stabilise this stretch: C319–C336, C338–C347, C353–C364, C358–C378, C380–C389, C396–C407, C401–C416, C418–C427, C434–C445, C439–C454, C456–C465, C472–C482, C477–C491, C493–C502, C509–C520, C514–C529, C531–C540, C547–C558, C552–C567, C569–C578, C585–C596, C590–C605, and C607–C616. Residues 505–541 (EYNECLSAPCLNAATCRDLINGYECVCLAEYKGTHCE) form the EGF-like 8; calcium-binding domain. The 37-residue stretch at 543 to 579 (YKDPCANISCLNGGTCDSEGLNGTCICAPGFTGEECD) folds into the EGF-like 9 domain. A glycan (N-linked (GlcNAc...) asparagine) is linked at N564. One can recognise an EGF-like 10; calcium-binding domain in the interval 581 to 617 (DINECDSNPCHHAGTCLDQPNGYTCHCPHGWVGANCE). Residues 641–661 (IIIGALCVAFILMLIILIVGI) traverse the membrane as a helical segment. At 662–737 (CRISRIEYQG…LVTLIKTKDL (76 aa)) the chain is on the cytoplasmic side. The tract at residues 677 to 680 (YEEF) is interaction with AP1G1 and somatodendritic targeting. S685 is subject to Phosphoserine. A Phosphotyrosine modification is found at Y711. Position 714 is a phosphothreonine (T714). Y721 is modified (phosphotyrosine). S722 is subject to Phosphoserine.

Interacts with AP1G1. Interacts with NOTCH1. Post-translationally, N-glycosylated. As to expression, specifically expressed in brain neurons (at protein level).

Its subcellular location is the cell membrane. Its function is as follows. Mediates neuron-glia interaction during astrocytogenesis. May promote differentiation of Bergmann glia during cerebellar development by activating DELTEX-dependent NOTCH1 signaling. This is Delta and Notch-like epidermal growth factor-related receptor (Dner) from Mus musculus (Mouse).